A 218-amino-acid polypeptide reads, in one-letter code: Small ribosomal subunit protein uS3c (218 aa).

Positions 43–118 constitute a KH type-2 domain; sequence IKDYVKKNKK…RLNIAITRIE (76 aa).

This sequence belongs to the universal ribosomal protein uS3 family. Part of the 30S ribosomal subunit.

It is found in the plastid. Its subcellular location is the chloroplast. This Phalaenopsis aphrodite subsp. formosana (Moth orchid) protein is Small ribosomal subunit protein uS3c (rps3).